The primary structure comprises 382 residues: V-type proton ATPase subunit C 1 (382 aa).

Threonine 2 is modified (N-acetylthreonine).

This sequence belongs to the V-ATPase C subunit family. In terms of assembly, V-ATPase is a heteromultimeric enzyme made up of two complexes: the ATP-hydrolytic V1 complex and the proton translocation V0 complex. The V1 complex consists of three catalytic AB heterodimers that form a heterohexamer, three peripheral stalks each consisting of EG heterodimers, one central rotor including subunits D and F, and the regulatory subunits C and H. The proton translocation complex V0 consists of the proton transport subunit a, a ring of proteolipid subunits c9c'', rotary subunit d, subunits e and f, and the accessory subunits ATP6AP1/Ac45 and ATP6AP2/PRR. As to expression, ubiquitous. Abundant in brain, liver, kidney and testis.

The protein localises to the cytoplasmic vesicle. It is found in the secretory vesicle. The protein resides in the synaptic vesicle membrane. It localises to the clathrin-coated vesicle membrane. Its function is as follows. Subunit of the V1 complex of vacuolar(H+)-ATPase (V-ATPase), a multisubunit enzyme composed of a peripheral complex (V1) that hydrolyzes ATP and a membrane integral complex (V0) that translocates protons. V-ATPase is responsible for acidifying and maintaining the pH of intracellular compartments and in some cell types, is targeted to the plasma membrane, where it is responsible for acidifying the extracellular environment. Subunit C is necessary for the assembly of the catalytic sector of the enzyme and is likely to have a specific function in its catalytic activity. The chain is V-type proton ATPase subunit C 1 (Atp6v1c1) from Mus musculus (Mouse).